Consider the following 50-residue polypeptide: uncharacterized protein (50 aa).

The interval 28–50 (SKLSPVTNGGKTIGKSNKVSKND) is disordered. Over residues 29 to 50 (KLSPVTNGGKTIGKSNKVSKND) the composition is skewed to polar residues.

This is an uncharacterized protein from Haemophilus influenzae (strain ATCC 51907 / DSM 11121 / KW20 / Rd).